The chain runs to 115 residues: Large ribosomal subunit protein bL19 (115 aa).

It belongs to the bacterial ribosomal protein bL19 family.

In terms of biological role, this protein is located at the 30S-50S ribosomal subunit interface and may play a role in the structure and function of the aminoacyl-tRNA binding site. The polypeptide is Large ribosomal subunit protein bL19 (Streptococcus equi subsp. equi (strain 4047)).